Reading from the N-terminus, the 335-residue chain is Mycobacterial beta-ketoacyl-[acyl-carrier-protein] synthase III (335 aa).

Catalysis depends on residues cysteine 122 and histidine 258. Positions 259–263 (QANSR) are ACP-binding. Asparagine 289 is an active-site residue.

The protein belongs to the thiolase-like superfamily. FabH family. Homodimer.

It localises to the cytoplasm. It catalyses the reaction malonyl-[ACP] + dodecanoyl-CoA + H(+) = 3-oxotetradecanoyl-[ACP] + CO2 + CoA. The protein operates within lipid metabolism; fatty acid biosynthesis. Its pathway is lipid metabolism; mycolic acid biosynthesis. In terms of biological role, catalyzes the condensation reaction of fatty acid synthesis by the addition to an acyl acceptor of two carbons from malonyl-ACP. Catalyzes the first condensation reaction which initiates fatty acid synthesis and may therefore play a role in governing the total rate of fatty acid production. Possesses both acetoacetyl-ACP synthase and acetyl transacylase activities. Its substrate specificity determines the biosynthesis of branched-chain and/or straight-chain of fatty acids. The polypeptide is Mycobacterial beta-ketoacyl-[acyl-carrier-protein] synthase III (Mycolicibacterium paratuberculosis (strain ATCC BAA-968 / K-10) (Mycobacterium paratuberculosis)).